The chain runs to 148 residues: Probable glycine cleavage system H protein 2 (148 aa).

One can recognise a Lipoyl-binding domain in the interval 32-114; it reads VIVVGITDIA…YGKGWLVKMK (83 aa). Lys-73 is subject to N6-lipoyllysine.

The protein belongs to the GcvH family. In terms of assembly, the glycine cleavage system is composed of four proteins: P, T, L and H. (R)-lipoate is required as a cofactor.

Its function is as follows. The glycine cleavage system catalyzes the degradation of glycine. The H protein shuttles the methylamine group of glycine from the P protein to the T protein. The polypeptide is Probable glycine cleavage system H protein 2 (Sulfurisphaera tokodaii (strain DSM 16993 / JCM 10545 / NBRC 100140 / 7) (Sulfolobus tokodaii)).